The primary structure comprises 310 residues: Protein-L-isoaspartate O-methyltransferase (310 aa).

Disordered stretches follow at residues 1 to 44 (MSGE…DKPA) and 67 to 88 (AKPA…PAAP). Over residues 14-29 (EDLKRAPRKSEGRPGE) the composition is skewed to basic and acidic residues. Low complexity predominate over residues 32–44 (AAGAVPKAADKPA). Residues 75–86 (PTAPKPALPKPA) show a composition bias toward pro residues. Residue Ser-157 is part of the active site.

It belongs to the methyltransferase superfamily. L-isoaspartyl/D-aspartyl protein methyltransferase family.

The protein localises to the cytoplasm. It carries out the reaction [protein]-L-isoaspartate + S-adenosyl-L-methionine = [protein]-L-isoaspartate alpha-methyl ester + S-adenosyl-L-homocysteine. Its function is as follows. Catalyzes the methyl esterification of L-isoaspartyl residues in peptides and proteins that result from spontaneous decomposition of normal L-aspartyl and L-asparaginyl residues. It plays a role in the repair and/or degradation of damaged proteins. This chain is Protein-L-isoaspartate O-methyltransferase, found in Burkholderia orbicola (strain MC0-3).